The sequence spans 145 residues: 3-dehydroquinate dehydratase (145 aa).

The active-site Proton acceptor is tyrosine 24. Substrate-binding residues include asparagine 75, histidine 81, and aspartate 88. Histidine 101 serves as the catalytic Proton donor. Substrate is bound by residues 102 to 103 (IS) and arginine 112.

The protein belongs to the type-II 3-dehydroquinase family. Homododecamer.

It carries out the reaction 3-dehydroquinate = 3-dehydroshikimate + H2O. It participates in metabolic intermediate biosynthesis; chorismate biosynthesis; chorismate from D-erythrose 4-phosphate and phosphoenolpyruvate: step 3/7. In terms of biological role, catalyzes a trans-dehydration via an enolate intermediate. The protein is 3-dehydroquinate dehydratase of Rhizobium etli (strain CIAT 652).